Reading from the N-terminus, the 229-residue chain is UPF0758 protein Moth_0536 (229 aa).

The MPN domain occupies 107-229; it reads VIRNPRDVAG…FTSLKERNLL (123 aa). Zn(2+)-binding residues include His178, His180, and Asp191. Residues 178–191 carry the JAMM motif motif; sequence HNHPSGDPTPSQED.

It belongs to the UPF0758 family.

The protein is UPF0758 protein Moth_0536 of Moorella thermoacetica (strain ATCC 39073 / JCM 9320).